The chain runs to 569 residues: Urease subunit alpha (569 aa).

Residues 131–569 form the Urease domain; sequence GGIDTHIHFI…LPLAQRYLLL (439 aa). His136, His138, and Lys219 together coordinate Ni(2+). Lys219 carries the post-translational modification N6-carboxylysine. His221 is a substrate binding site. Residues His248 and His274 each coordinate Ni(2+). Residue His322 is the Proton donor of the active site. Asp362 contacts Ni(2+).

Belongs to the metallo-dependent hydrolases superfamily. Urease alpha subunit family. As to quaternary structure, heterotrimer of UreA (gamma), UreB (beta) and UreC (alpha) subunits. Three heterotrimers associate to form the active enzyme. It depends on Ni cation as a cofactor. In terms of processing, carboxylation allows a single lysine to coordinate two nickel ions.

The protein resides in the cytoplasm. It carries out the reaction urea + 2 H2O + H(+) = hydrogencarbonate + 2 NH4(+). It functions in the pathway nitrogen metabolism; urea degradation; CO(2) and NH(3) from urea (urease route): step 1/1. This chain is Urease subunit alpha, found in Parasynechococcus marenigrum (strain WH8102).